The sequence spans 198 residues: Probable chemoreceptor glutamine deamidase CheD (198 aa).

Belongs to the CheD family.

The enzyme catalyses L-glutaminyl-[protein] + H2O = L-glutamyl-[protein] + NH4(+). Its function is as follows. Probably deamidates glutamine residues to glutamate on methyl-accepting chemotaxis receptors (MCPs), playing an important role in chemotaxis. The protein is Probable chemoreceptor glutamine deamidase CheD of Xanthomonas campestris pv. campestris (strain 8004).